Reading from the N-terminus, the 208-residue chain is Thymidylate kinase (208 aa).

Position 9 to 16 (9 to 16 (GGEGCGKS)) interacts with ATP.

This sequence belongs to the thymidylate kinase family.

The enzyme catalyses dTMP + ATP = dTDP + ADP. Functionally, phosphorylation of dTMP to form dTDP in both de novo and salvage pathways of dTTP synthesis. The protein is Thymidylate kinase of Dehalococcoides mccartyi (strain CBDB1).